Reading from the N-terminus, the 358-residue chain is Valine dehydrogenase (358 aa).

The active site involves lysine 88. 188-194 contributes to the NAD(+) binding site; sequence GVGKVGH.

This sequence belongs to the Glu/Leu/Phe/Val dehydrogenases family. In terms of assembly, homodimer.

The protein localises to the cytoplasm. The catalysed reaction is L-valine + NAD(+) + H2O = 3-methyl-2-oxobutanoate + NH4(+) + NADH + H(+). Its pathway is amino-acid degradation; L-valine degradation. Oxidative deamination of branched-chain amino acids. The catabolism of valine is the major source of fatty acid precursors for macrolide biosynthesis and a vital source of antibiotic precursors. This chain is Valine dehydrogenase (vdh), found in Streptomyces virginiae (Streptomyces cinnamonensis).